We begin with the raw amino-acid sequence, 127 residues long: Histone H2B type 1-A (127 aa).

The residue at position 2 (proline 2) is an N-acetylproline. 7 positions are modified to N6-acetyllysine; alternate: lysine 7, lysine 13, lysine 14, lysine 17, lysine 18, lysine 22, and lysine 25. N6-crotonyllysine; alternate is present on residues lysine 7, lysine 13, lysine 14, lysine 17, lysine 18, lysine 22, lysine 25, and lysine 36. An N6-lactoyllysine; alternate mark is found at lysine 7 and lysine 13. Lysine 7 participates in a covalent cross-link: Glycyl lysine isopeptide (Lys-Gly) (interchain with G-Cter in SUMO2); alternate. 4 positions are modified to N6-lactoyllysine; alternate: lysine 17, lysine 18, lysine 22, and lysine 25. Lysine 22 is covalently cross-linked (Glycyl lysine isopeptide (Lys-Gly) (interchain with G-Cter in SUMO2); alternate). At lysine 36 the chain carries N6-succinyllysine; alternate. Lysine 36 is covalently cross-linked (Glycyl lysine isopeptide (Lys-Gly) (interchain with G-Cter in ubiquitin); alternate). Serine 38 bears the Phosphoserine mark. Lysine 45 carries the post-translational modification N6-lactoyllysine; alternate. The residue at position 48 (lysine 48) is an N6-methyllysine. An N6,N6-dimethyllysine modification is found at lysine 59. At arginine 81 the chain carries Dimethylated arginine. N6-acetyllysine; alternate is present on lysine 87. Lysine 87 bears the N6-lactoyllysine; alternate mark. Lysine 87 is modified (N6,N6,N6-trimethyllysine; alternate). Arginine 88 and arginine 94 each carry omega-N-methylarginine. Lysine 110 is modified (N6-lactoyllysine; alternate). Lysine 110 bears the N6-methyllysine mark. At threonine 117 the chain carries Phosphothreonine. Lysine 118 and lysine 122 each carry N6-lactoyllysine; alternate. N6-succinyllysine; alternate occurs at positions 118 and 122. Lysine 118 is subject to N6-methylated lysine; alternate. Residue lysine 122 forms a Glycyl lysine isopeptide (Lys-Gly) (interchain with G-Cter in ubiquitin); alternate linkage.

It belongs to the histone H2B family. As to quaternary structure, the nucleosome is a histone octamer containing two molecules each of H2A, H2B, H3 and H4 assembled in one H3-H4 heterotetramer and two H2A-H2B heterodimers. Interacts with H2AB1; preferentially dimerizes with H2AB1 to form nucleosomes. In terms of processing, monoubiquitination at Lys-36 by the MSL1/MSL2 dimer is required for histone H3 'Lys-4' (H3K4me) and 'Lys-79' (H3K79me) methylation and transcription activation at specific gene loci, such as HOXA9 and MEIS1 loci. Similarly, monoubiquitination of Lys-122 (H2BK120Ub) by the RNF20/40 complex gives a specific tag for epigenetic transcriptional activation and is also prerequisite for histone H3 'Lys-4' and 'Lys-79' methylation. It also functions cooperatively with the FACT dimer to stimulate elongation by RNA polymerase II. H2BK120Ub also acts as a regulator of mRNA splicing: deubiquitination by USP49 is required for efficient cotranscriptional splicing of a large set of exons. Post-translationally, crotonylation (Kcr) is specifically present in male germ cells and marks testis-specific genes in post-meiotic cells, including X-linked genes that escape sex chromosome inactivation in haploid cells. Crotonylation marks active promoters and enhancers and confers resistance to transcriptional repressors. It is also associated with post-meiotically activated genes on autosomes. Acetylated during spermatogenesis. Acetylated form is most abundant in spermatogonia compared to spermatocytes and round spermatids. In terms of processing, phosphorylated at Thr-117 in spermatogonia, spermatocytes and round spermatids. Post-translationally, methylated at Lys-118 in spermatogonia, spermatocytes and round spermatids. Lactylated in macrophages by EP300/P300 by using lactoyl-CoA directly derived from endogenous or exogenous lactate, leading to stimulates gene transcription. As to expression, mainly expressed in testis, and the corresponding protein is also present in mature sperm. Also present in metaphase oocytes (at protein level).

It is found in the nucleus. The protein resides in the chromosome. In terms of biological role, variant histone specifically required to direct the transformation of dissociating nucleosomes to protamine in male germ cells. Entirely replaces classical histone H2B prior nucleosome to protamine transition and probably acts as a nucleosome dissociating factor that creates a more dynamic chromatin, facilitating the large-scale exchange of histones. In condensing spermatids, the heterodimer between H2AB1 and H2BC1/TH2B is loaded onto the nucleosomes and promotes loading of transition proteins (TNP1 and TNP2) onto the nucleosomes. Inclusion of the H2AB1-H2BC1/TH2B dimer into chromatin opens the nucleosomes, releasing the nucleosomal DNA ends and allowing the invasion of nucleosomes by transition proteins (TNP1 and TNP2). Then, transition proteins drive the recruitment and processing of protamines, which are responsible for histone eviction. Also expressed maternally and is present in the female pronucleus, suggesting a similar role in protamine replacement by nucleosomes at fertilization. Core component of nucleosome. Nucleosomes wrap and compact DNA into chromatin, limiting DNA accessibility to the cellular machineries which require DNA as a template. Histones thereby play a central role in transcription regulation, DNA repair, DNA replication and chromosomal stability. DNA accessibility is regulated via a complex set of post-translational modifications of histones, also called histone code, and nucleosome remodeling. The chain is Histone H2B type 1-A from Mus musculus (Mouse).